A 993-amino-acid chain; its full sequence is Lateral signaling target protein 2 homolog (993 aa).

Disordered regions lie at residues 340-449 (DQRN…DTTD), 494-623 (DGYG…TVVQ), 759-813 (GARH…GDQE), and 825-902 (AVNE…PPAW). Residues 343–360 (NNNNNINNNSSSSSNSNS) show a composition bias toward low complexity. The span at 372 to 405 (RSPSMLSLSTASPTPSHSIGSTFSAATSSTNPPV) shows a compositional bias: polar residues. Over residues 409-448 (DGDDADDDDDGDDDDEDDDDDVDDDLVGNDDSDDDDDDTT) the composition is skewed to acidic residues. Phosphoserine is present on residues Ser-525 and Ser-526. Polar residues predominate over residues 535-549 (SHNNTTTIKSPDSDG). Over residues 559–608 (SRQRHSHHHHRHHHHHHRHSSHSSHSHHHQHQQHHSQPHPHRTTRSGRKR) the composition is skewed to basic residues. The span at 759–801 (GARHSAGASMQRNHTTIDNNNSTSSSPPDATITTTTTTTTTRS) shows a compositional bias: low complexity. Ser-808 is subject to Phosphoserine. Low complexity-rich tracts occupy residues 842–862 (SNTP…QNSP) and 884–896 (TTAT…GTGT). An FYVE-type zinc finger spans residues 905–965 (DGKAPRCMSC…VCRDCYAREI (61 aa)). Zn(2+)-binding residues include Cys-911, Cys-914, Cys-927, Cys-930, Cys-935, Cys-938, Cys-957, and Cys-960. The tract at residues 968–993 (SGGGGGGVVQMQRQQAANRPQTASAS) is disordered. A compositionally biased stretch (polar residues) spans 978–993 (MQRQQAANRPQTASAS).

Belongs to the lst-2 family.

Its function is as follows. Negative regulator of epidermal growth factor receptor (EGFR) signaling. The polypeptide is Lateral signaling target protein 2 homolog (Drosophila willistoni (Fruit fly)).